Consider the following 212-residue polypeptide: Riboflavin kinase (212 aa).

Residues 1–87 (MKKSNLDLLI…HEELSDALYR (87 aa)) are H-T-H motif-like. The riboflavin kinase stretch occupies residues 88–212 (GIIIGEVVSG…DGDRIRIKTL (125 aa)). Residue 97 to 102 (GIGEGA) participates in CDP binding. The Mg(2+) site is built by threonine 124 and asparagine 126. FMN contacts are provided by threonine 180 and glutamate 188. 193–196 (VNLR) contributes to the CDP binding site.

Belongs to the archaeal riboflavin kinase family. Mg(2+) is required as a cofactor.

The catalysed reaction is riboflavin + CTP = CDP + FMN + H(+). Its pathway is cofactor biosynthesis; FMN biosynthesis; FMN from riboflavin (CTP route): step 1/1. Catalyzes the CTP-dependent phosphorylation of riboflavin (vitamin B2) to form flavin mononucleotide (FMN). This Pyrococcus furiosus (strain ATCC 43587 / DSM 3638 / JCM 8422 / Vc1) protein is Riboflavin kinase (ribK).